We begin with the raw amino-acid sequence, 132 residues long: Two-component response regulator ORR42 (132 aa).

The 115-residue stretch at 11–125 folds into the Response regulatory domain; that stretch reads RALLVEDIKV…LEHILQETRS (115 aa). The residue at position 61 (Asp61) is a 4-aspartylphosphate.

This sequence belongs to the ARR family. Type-C subfamily. Post-translationally, two-component system major event consists of a His-to-Asp phosphorelay between a sensor histidine kinase (HK) and a response regulator (RR). In plants, the His-to-Asp phosphorelay involves an additional intermediate named Histidine-containing phosphotransfer protein (HPt). This multistep phosphorelay consists of a His-Asp-His-Asp sequential transfer of a phosphate group between first a His and an Asp of the HK protein, followed by the transfer to a conserved His of the HPt protein and finally the transfer to an Asp in the receiver domain of the RR protein.

Functionally, functions as a response regulator involved in His-to-Asp phosphorelay signal transduction system. Phosphorylation of the Asp residue in the receiver domain activates the ability of the protein to promote the transcription of target genes. May directly activate some type-A response regulators in response to cytokinins. The sequence is that of Two-component response regulator ORR42 from Oryza sativa subsp. japonica (Rice).